We begin with the raw amino-acid sequence, 539 residues long: D-mannonate oxidoreductase (539 aa).

Trp-39 to Gly-50 is an NAD(+) binding site.

Belongs to the mannitol dehydrogenase family. UxuB subfamily.

It catalyses the reaction D-mannonate + NAD(+) = keto-D-fructuronate + NADH + H(+). It participates in carbohydrate metabolism. Its function is as follows. Catalyzes the reduction of D-fructuronate (D-FruA) to D-mannonate (D-ManA). The protein is D-mannonate oxidoreductase of Thermotoga maritima (strain ATCC 43589 / DSM 3109 / JCM 10099 / NBRC 100826 / MSB8).